The chain runs to 69 residues: Putative membrane protein insertion efficiency factor (69 aa).

The protein belongs to the UPF0161 family.

The protein resides in the cell inner membrane. Could be involved in insertion of integral membrane proteins into the membrane. The chain is Putative membrane protein insertion efficiency factor from Nitrosomonas eutropha (strain DSM 101675 / C91 / Nm57).